The chain runs to 1457 residues: DNA-directed RNA polymerase III subunit RPC1 (1457 aa).

Positions 67, 70, 77, 80, 107, 110, and 154 each coordinate Zn(2+). Residues aspartate 508, aspartate 510, and aspartate 512 each contribute to the Mg(2+) site. Residues 854 to 866 (PPEFLFHSISGRE) form a bridging helix region.

It belongs to the RNA polymerase beta' chain family. In terms of assembly, component of the RNA polymerase III (Pol III) complex consisting of 17 subunits.

Its subcellular location is the nucleus. It catalyses the reaction RNA(n) + a ribonucleoside 5'-triphosphate = RNA(n+1) + diphosphate. Its function is as follows. DNA-dependent RNA polymerase catalyzes the transcription of DNA into RNA using the four ribonucleoside triphosphates as substrates. Largest and catalytic core component of RNA polymerase III which synthesizes small RNAs, such as 5S rRNA and tRNAs. Forms the polymerase active center together with the second largest subunit. A single-stranded DNA template strand of the promoter is positioned within the central active site cleft of Pol III. A bridging helix emanates from RPC1 and crosses the cleft near the catalytic site and is thought to promote translocation of Pol III by acting as a ratchet that moves the RNA-DNA hybrid through the active site by switching from straight to bent conformations at each step of nucleotide addition. This Debaryomyces hansenii (strain ATCC 36239 / CBS 767 / BCRC 21394 / JCM 1990 / NBRC 0083 / IGC 2968) (Yeast) protein is DNA-directed RNA polymerase III subunit RPC1 (RPC1).